The primary structure comprises 494 residues: Guanosine-5'-triphosphate,3'-diphosphate pyrophosphatase (494 aa).

Belongs to the GppA/Ppx family. GppA subfamily.

It catalyses the reaction guanosine 3'-diphosphate 5'-triphosphate + H2O = guanosine 3',5'-bis(diphosphate) + phosphate + H(+). Its pathway is purine metabolism; ppGpp biosynthesis; ppGpp from GTP: step 2/2. Functionally, catalyzes the conversion of pppGpp to ppGpp. Guanosine pentaphosphate (pppGpp) is a cytoplasmic signaling molecule which together with ppGpp controls the 'stringent response', an adaptive process that allows bacteria to respond to amino acid starvation, resulting in the coordinated regulation of numerous cellular activities. The polypeptide is Guanosine-5'-triphosphate,3'-diphosphate pyrophosphatase (Escherichia fergusonii (strain ATCC 35469 / DSM 13698 / CCUG 18766 / IAM 14443 / JCM 21226 / LMG 7866 / NBRC 102419 / NCTC 12128 / CDC 0568-73)).